Here is a 396-residue protein sequence, read N- to C-terminus: N-terminal EF-hand calcium-binding protein 3 (396 aa).

Residues 14–34 (PPAPQPQPQTPRHPQLAPDPG) are compositionally biased toward pro residues. Residues 14-36 (PPAPQPQPQTPRHPQLAPDPGPA) are disordered. Residues 36–71 (AGHTLFQDVFRRADKNDDGKLSFEEFQNYFADGVLS) enclose the EF-hand domain. Ca(2+) is bound by residues D49, N51, D53, K55, and E60. The tract at residues 181 to 190 (VEAQSRLCGS) is required for interaction with APBA3. The tract at residues 197-220 (ALRSVSRSSTWSPGSSDTGRSSEA) is disordered. Over residues 206 to 217 (TWSPGSSDTGRS) the composition is skewed to polar residues. One can recognise an ABM domain in the interval 296 to 385 (LMAQRQVQVA…RAPDTLTTVF (90 aa)).

Interacts with the N-terminal domain of APBA2. Interacts with NEK2. Interacts with APBA3; APBA3 seems to mediate the interaction between NECAB3 and HIF1AN. Phosphorylated by NEK2. As to expression, strongly expressed in heart and skeletal muscle, moderately in brain and pancreas.

It is found in the golgi apparatus. In terms of biological role, inhibits the interaction of APBA2 with amyloid-beta precursor protein (APP), and hence allows formation of amyloid-beta. May enhance the activity of HIF1A and thus promote glycolysis under normoxic conditions; the function requires its ABM domain and may implicate the stabilization of the interaction between HIF1AN and APBA3. The chain is N-terminal EF-hand calcium-binding protein 3 (NECAB3) from Homo sapiens (Human).